The following is a 93-amino-acid chain: Putative defensin-like protein 282 (93 aa).

The signal sequence occupies residues 1–25; sequence MANATSFIALAYLLASALMTTVVLG. 3 disulfide bridges follow: Cys-51/Cys-83, Cys-66/Cys-90, and Cys-72/Cys-92.

The protein belongs to the DEFL family.

It is found in the secreted. This chain is Putative defensin-like protein 282, found in Arabidopsis thaliana (Mouse-ear cress).